Reading from the N-terminus, the 161-residue chain is Phosphopantetheine adenylyltransferase (161 aa).

Serine 11 is a substrate binding site. Residues 11–12 and histidine 19 each bind ATP; that span reads SF. Substrate-binding residues include lysine 43, leucine 75, and arginine 89. ATP is bound by residues 90–92, glutamate 100, and 125–131; these read GLR and YSFISSS.

It belongs to the bacterial CoaD family. As to quaternary structure, homohexamer. Mg(2+) is required as a cofactor.

The protein resides in the cytoplasm. The enzyme catalyses (R)-4'-phosphopantetheine + ATP + H(+) = 3'-dephospho-CoA + diphosphate. The protein operates within cofactor biosynthesis; coenzyme A biosynthesis; CoA from (R)-pantothenate: step 4/5. Reversibly transfers an adenylyl group from ATP to 4'-phosphopantetheine, yielding dephospho-CoA (dPCoA) and pyrophosphate. This Staphylococcus saprophyticus subsp. saprophyticus (strain ATCC 15305 / DSM 20229 / NCIMB 8711 / NCTC 7292 / S-41) protein is Phosphopantetheine adenylyltransferase.